The following is a 292-amino-acid chain: Lyso-ornithine lipid O-acyltransferase (292 aa).

The chain crosses the membrane as a helical span at residues 11-31 (GMLLVMVSLVLMPVQILCLWL). The segment at 258-292 (RLRGRSRSAAKGEPAPACSAAPDIPSDAQRSRLAP) is disordered.

This sequence belongs to the 1-acyl-sn-glycerol-3-phosphate acyltransferase family. OlsA subfamily.

It localises to the membrane. It catalyses the reaction a lyso-ornithine lipid + a fatty acyl-[ACP] = an N(2)-[(3R)-3-(acyloxy)acyl]-L-ornithine lipid + holo-[ACP]. It participates in lipid metabolism. Catalyzes the second step in the formation of ornithine lipids, which are phosphorus-free membrane lipids. Uses acyl-acyl carrier protein (acyl-AcpP) as an acyl donor and converts lyso-ornithine lipid (LOL) into ornithine lipid (OL). The polypeptide is Lyso-ornithine lipid O-acyltransferase (Rhizobium meliloti (strain 1021) (Ensifer meliloti)).